Here is a 116-residue protein sequence, read N- to C-terminus: Cysteine-rich venom protein Cau1 (116 aa).

One can recognise an SCP domain in the interval 4–42 (SYAVVGHYTQIVWYKSDRIGCAAAYCPSSVYNYFYVCQY). Disulfide bonds link Cys24/Cys40, Cys62/Cys69, Cys65/Cys74, Cys87/Cys105, and Cys96/Cys109. The 34-residue stretch at 78 to 111 (CRVEDEFINCKDMAESRDCQDNYMMTNCAAFCSC) folds into the ShKT domain.

The protein belongs to the CRISP family. As to expression, expressed by the venom gland.

Its subcellular location is the secreted. Blocks contraction of smooth muscle elicited by high potassium-induced depolarization, but does not block caffeine-stimulated contraction. May target voltage-gated calcium channels on smooth muscle. This Causus rhombeatus (Rhombic night adder) protein is Cysteine-rich venom protein Cau1.